The following is a 346-amino-acid chain: Signal recognition particle receptor FtsY (346 aa).

Residues 143–150 (GVNGVGKT), 225–229 (DTSGR), and 289–292 (TKMD) each bind GTP.

The protein belongs to the GTP-binding SRP family. FtsY subfamily. As to quaternary structure, part of the signal recognition particle protein translocation system, which is composed of SRP and FtsY.

Its subcellular location is the cell membrane. It is found in the cytoplasm. The catalysed reaction is GTP + H2O = GDP + phosphate + H(+). Its function is as follows. Involved in targeting and insertion of nascent membrane proteins into the cytoplasmic membrane. Acts as a receptor for the complex formed by the signal recognition particle (SRP) and the ribosome-nascent chain (RNC). The protein is Signal recognition particle receptor FtsY of Mycoplasma genitalium (strain ATCC 33530 / DSM 19775 / NCTC 10195 / G37) (Mycoplasmoides genitalium).